A 495-amino-acid chain; its full sequence is OTU domain-containing protein CG3251 (495 aa).

Residues 29 to 150 (LFRKHMLGDA…MGHFETVLTM (122 aa)) enclose the OTU domain. In terms of domain architecture, Tudor spans 302 to 364 (NFKVGAKCQV…HPLPPDEFKA (63 aa)). Positions 375 to 389 (LHNSQMGRQSVQGDQ) are enriched in polar residues. The tract at residues 375-404 (LHNSQMGRQSVQGDQQGFVPDPMPGTAPSM) is disordered. The segment covering 395-404 (DPMPGTAPSM) has biased composition (pro residues).

Functionally, putative OTU-type deubiquitinase. Catalytically inactive towards all diubiquitin molecules and long K48- and K63- linked ubiquitin chains in vitro. Potential modulator of apoptosis. In Drosophila melanogaster (Fruit fly), this protein is OTU domain-containing protein CG3251.